Consider the following 387-residue polypeptide: Krueppel-like factor 17 (387 aa).

3 disordered regions span residues 28-54, 213-234, and 257-277; these read FLDM…IRRV, SRDP…PLES, and RREA…SPVS. Positions 30 to 46 are enriched in polar residues; it reads DMSSSPGSGGVHTSWNR. Residues 257–270 show a composition bias toward basic and acidic residues; sequence RREAQNSRAQERAS. C2H2-type zinc fingers lie at residues 280–304, 310–334, and 340–362; these read YHCE…QRKH, YKCT…TRIH, and HKCD…QRTH. The disordered stretch occupies residues 357-387; the sequence is QHQRTHMRMPRSPDPQADSGRRAGPLPAPHL.

Belongs to the Sp1 C2H2-type zinc-finger protein family.

The protein resides in the nucleus. Its function is as follows. Transcription repressor that binds to the promoter of target genes and prevents their expression. Acts as a negative regulator of epithelial-mesenchymal transition and metastasis in breast cancer. Specifically binds the 5'-CACCC-3' sequence in the promoter of ID1, a key metastasis regulator in breast cancer, and repress its expression. May be a germ cell-specific transcription factor that plays important roles in spermatid differentiation and oocyte development. This Sus scrofa (Pig) protein is Krueppel-like factor 17 (KLF17).